Reading from the N-terminus, the 153-residue chain is Large ribosomal subunit protein uL30 (153 aa).

This sequence belongs to the universal ribosomal protein uL30 family. Part of the 50S ribosomal subunit.

In Metallosphaera sedula (strain ATCC 51363 / DSM 5348 / JCM 9185 / NBRC 15509 / TH2), this protein is Large ribosomal subunit protein uL30.